The primary structure comprises 297 residues: MDKQEAKHINMPSPSTCEHKSVEAYLFIDPLCKDCWEIEPFIIKLWLEYGKYFSIRHIVTGKVDGTNASSHKWNKPANIRFVWEKTTSLHGFSCDGKVHMQEASSTPYLVSMAIKAAELQGRKAGSKFLRKLQEYIFLENVSNPDCELLLACAKDSDIDVEEFKKDLYSASAKKAFQCDLKFTNEMHITEIPSLVFFHANSDEEGIKIAGTYSYDVYVQLLKELVKCEIEPEPLPPLEVLLEATQFISSKEVAFIYDCSKQEIERELKKLQLKRKVQMIDVKCERYWKWIAKEKDLV.

This sequence belongs to the SpxH family. As to quaternary structure, interacts with Spx.

Its subcellular location is the cytoplasm. Functionally, adapter protein required for efficient degradation of Spx by ClpXP under non-stress conditions. Interaction with Spx stabilizes Spx and exposes the C-terminus of Spx for recognition and proteolysis by ClpXP. This is ClpXP adapter protein SpxH from Bacillus cereus (strain ZK / E33L).